Consider the following 149-residue polypeptide: Ribonuclease P protein component (149 aa).

Residues 123 to 149 (GTKVSRRSNGALHDAAPSSQPDPTVSG) form a disordered region. Polar residues predominate over residues 139–149 (PSSQPDPTVSG).

This sequence belongs to the RnpA family. As to quaternary structure, consists of a catalytic RNA component (M1 or rnpB) and a protein subunit.

The enzyme catalyses Endonucleolytic cleavage of RNA, removing 5'-extranucleotides from tRNA precursor.. Its function is as follows. RNaseP catalyzes the removal of the 5'-leader sequence from pre-tRNA to produce the mature 5'-terminus. It can also cleave other RNA substrates such as 4.5S RNA. The protein component plays an auxiliary but essential role in vivo by binding to the 5'-leader sequence and broadening the substrate specificity of the ribozyme. The polypeptide is Ribonuclease P protein component (Caulobacter vibrioides (strain ATCC 19089 / CIP 103742 / CB 15) (Caulobacter crescentus)).